A 1105-amino-acid polypeptide reads, in one-letter code: Mediator of RNA polymerase II transcription subunit 14 (1105 aa).

Residues Ala28 to Pro48 are disordered.

It belongs to the Mediator complex subunit 14 family. As to quaternary structure, component of the Mediator complex.

It is found in the nucleus. Functionally, component of the Mediator complex, a coactivator involved in the regulated transcription of nearly all RNA polymerase II-dependent genes. Mediator functions as a bridge to convey information from gene-specific regulatory proteins to the basal RNA polymerase II transcription machinery. Mediator is recruited to promoters by direct interactions with regulatory proteins and serves as a scaffold for the assembly of a functional preinitiation complex with RNA polymerase II and the general transcription factors. This is Mediator of RNA polymerase II transcription subunit 14 (RGR1) from Coccidioides immitis (strain RS) (Valley fever fungus).